Reading from the N-terminus, the 20-residue chain is Protein PR-L3 (20 aa).

Belongs to the BetVI family.

This Lupinus luteus (European yellow lupine) protein is Protein PR-L3.